The primary structure comprises 318 residues: Glutathione synthetase (318 aa).

In terms of domain architecture, ATP-grasp spans glutamate 124–glutamate 310. An ATP-binding site is contributed by phenylalanine 150–glycine 207. Glutamate 281 and asparagine 283 together coordinate Mg(2+).

Belongs to the prokaryotic GSH synthase family. Mg(2+) is required as a cofactor. The cofactor is Mn(2+).

It catalyses the reaction gamma-L-glutamyl-L-cysteine + glycine + ATP = glutathione + ADP + phosphate + H(+). It functions in the pathway sulfur metabolism; glutathione biosynthesis; glutathione from L-cysteine and L-glutamate: step 2/2. The polypeptide is Glutathione synthetase (Vibrio cholerae serotype O1 (strain ATCC 39315 / El Tor Inaba N16961)).